Here is a 100-residue protein sequence, read N- to C-terminus: Small ribosomal subunit protein uS14c (100 aa).

Belongs to the universal ribosomal protein uS14 family. Part of the 30S ribosomal subunit.

The protein resides in the plastid. Its subcellular location is the chloroplast. Binds 16S rRNA, required for the assembly of 30S particles. This is Small ribosomal subunit protein uS14c from Calycanthus floridus var. glaucus (Eastern sweetshrub).